The chain runs to 327 residues: Expansin-B7 (327 aa).

An N-terminal signal peptide occupies residues 1-30 (MAGRSRRRSFWSVGVAAALLCLLAAHGCSA). The disordered stretch occupies residues 30–88 (AKHHKPKPTPGGISGNASSSSSNSSTPSIPPPVAPTPTAPTPPIPSPGTGSSNGSSGGG). The segment covering 44-56 (GNASSSSSNSSTP) has biased composition (low complexity). 2 N-linked (GlcNAc...) asparagine glycosylation sites follow: N45 and N52. The segment covering 57–75 (SIPPPVAPTPTAPTPPIPS) has biased composition (pro residues). N-linked (GlcNAc...) asparagine glycosylation occurs at N82. Positions 112-218 (GGACGFKNVN…RRVPCQYPGL (107 aa)) constitute an Expansin-like EG45 domain. 3 disulfide bridges follow: C115/C143, C146/C213, and C151/C157. The Expansin-like CBD domain occupies 231–322 (VYMAILVEYE…DWQPNTVYSS (92 aa)). N298 carries an N-linked (GlcNAc...) asparagine glycan.

This sequence belongs to the expansin family. Expansin B subfamily.

The protein resides in the secreted. The protein localises to the cell wall. It localises to the membrane. Its function is as follows. May cause loosening and extension of plant cell walls by disrupting non-covalent bonding between cellulose microfibrils and matrix glucans. No enzymatic activity has been found. May be required for rapid internodal elongation in deepwater rice during submergence. This is Expansin-B7 (EXPB7) from Oryza sativa subsp. japonica (Rice).